A 309-amino-acid chain; its full sequence is Glutamyl-Q tRNA(Asp) synthetase (309 aa).

L-glutamate-binding positions include 8–12 (RFSPS) and E44. The 'HIGH' region motif lies at 11–21 (PSPTGPLHAGS). C100, C102, Y126, and C130 together coordinate Zn(2+). L-glutamate-binding residues include Y205 and R223. Positions 261 to 265 (KLSKQ) match the 'KMSKS' region motif. K264 serves as a coordination point for ATP.

Belongs to the class-I aminoacyl-tRNA synthetase family. GluQ subfamily. It depends on Zn(2+) as a cofactor.

Catalyzes the tRNA-independent activation of glutamate in presence of ATP and the subsequent transfer of glutamate onto a tRNA(Asp). Glutamate is transferred on the 2-amino-5-(4,5-dihydroxy-2-cyclopenten-1-yl) moiety of the queuosine in the wobble position of the QUC anticodon. This Albidiferax ferrireducens (strain ATCC BAA-621 / DSM 15236 / T118) (Rhodoferax ferrireducens) protein is Glutamyl-Q tRNA(Asp) synthetase.